Consider the following 657-residue polypeptide: Broad substrate specificity ATP-binding cassette transporter ABCG2 (657 aa).

The disordered stretch occupies residues 1 to 25; sequence MSSSNDHVLVPMSQRNKNGLPGMSS. Over 1 to 395 the chain is Cytoplasmic; that stretch reads MSSSNDHVLV…KNLLGNPQAS (395 aa). Residues 48–285 form the ABC transporter domain; sequence VKSGFLVRKT…FASAGYHCEP (238 aa). Residues 79 to 86, 183 to 189, Glu-210, and His-242 each bind ATP; these read GPTGGGKS and RGISGGE. In terms of domain architecture, ABC transmembrane type-2 spans 389 to 653; sequence LGNPQASVAQ…TIAYLKLLFL (265 aa). Residues 396–416 form a helical membrane-spanning segment; the sequence is VAQLIVTVILGLIIGALYFGL. Residues 417 to 428 lie on the Extracellular side of the membrane; sequence KNDPTGMQNRAG. The chain crosses the membrane as a helical span at residues 429–449; it reads VFFFLTTNQCFTSVSAVELFV. The Cytoplasmic segment spans residues 450–477; that stretch reads VEKKLFIHEYISGYYRVSSYFFGKLVSD. The chain crosses the membrane as a helical span at residues 478–498; it reads LLPMRFLPSVIYTCILYFMLG. The Extracellular portion of the chain corresponds to 499 to 506; it reads LKRTVEAF. A helical transmembrane segment spans residues 507–527; sequence FIMMFTLIMVAYTASSMALAI. The Cytoplasmic portion of the chain corresponds to 528-535; sequence AAGQSVVS. A helical membrane pass occupies residues 536–556; the sequence is VATLLMTISFVFMMLFSGLLV. At 557–632 the chain is on the extracellular side; the sequence is NLRTIGPWLS…LSPWGLWRNH (76 aa). Cys-592 and Cys-610 are joined by a disulfide. N-linked (GlcNAc...) asparagine glycans are attached at residues Asn-596 and Asn-600. The helical transmembrane segment at 633-653 threads the bilayer; that stretch reads VALACMIIIFLTIAYLKLLFL. The Cytoplasmic portion of the chain corresponds to 654 to 657; it reads KKYS.

This sequence belongs to the ABC transporter superfamily. ABCG family. Eye pigment precursor importer (TC 3.A.1.204) subfamily. In terms of assembly, homodimer; disulfide-linked. The minimal functional unit is a homodimer, but the major oligomeric form in plasma membrane is a homotetramer with possibility of higher order oligomerization up to homododecamers. N-glycosylated in brain capillary, kidney and small intestine but not in heart. In terms of processing, N-glycosylated. Glycosylation-deficient ABCG2 is normally expressed and functional. Post-translationally, phosphorylated. Phosphorylation may regulate the localization to the plasma membrane, the homooligomerization and therefore, the activity of the transporter. Highly expressed in brain capillary, kidney and small intestine. Lower expression in heart. Preferentially expressed (at protein level) on the luminal membrane of brain capillaries, in kidney and small intestine.

The protein resides in the cell membrane. It localises to the apical cell membrane. It is found in the mitochondrion membrane. The catalysed reaction is ATP + H2O + xenobioticSide 1 = ADP + phosphate + xenobioticSide 2.. It carries out the reaction urate(in) + ATP + H2O = urate(out) + ADP + phosphate + H(+). The enzyme catalyses indoxyl sulfate(in) + ATP + H2O = indoxyl sulfate(out) + ADP + phosphate + H(+). It catalyses the reaction sphing-4-enine 1-phosphate(in) + ATP + H2O = sphing-4-enine 1-phosphate(out) + ADP + phosphate + H(+). The catalysed reaction is estrone 3-sulfate(in) + ATP + H2O = estrone 3-sulfate(out) + ADP + phosphate + H(+). It carries out the reaction dehydroepiandrosterone 3-sulfate(in) + ATP + H2O = dehydroepiandrosterone 3-sulfate(out) + ADP + phosphate + H(+). The enzyme catalyses 4-methylumbelliferone sulfate(in) + ATP + H2O = 4-methylumbelliferone sulfate(out) + ADP + phosphate + H(+). It catalyses the reaction 5,7-dimethyl-2-methylamino-4-(3-pyridylmethyl)-1,3-benzothiazol-6-yl beta-D-glucuronate(in) + ATP + H2O = 5,7-dimethyl-2-methylamino-4-(3-pyridylmethyl)-1,3-benzothiazol-6-yl beta-D-glucuronate(out) + ADP + phosphate + H(+). The catalysed reaction is 4-methylumbelliferone beta-D-glucuronate(in) + ATP + H2O = 4-methylumbelliferone beta-D-glucuronate(out) + ADP + phosphate + H(+). It carries out the reaction 5,7-dimethyl-2-methylamino-4-(3-pyridylmethyl)-1,3-benzothiazol-6-yl sulfate(in) + ATP + H2O = 5,7-dimethyl-2-methylamino-4-(3-pyridylmethyl)-1,3-benzothiazol-6-yl sulfate(out) + ADP + phosphate + H(+). The enzyme catalyses 17beta-estradiol 17-O-(beta-D-glucuronate)(in) + ATP + H2O = 17beta-estradiol 17-O-(beta-D-glucuronate)(out) + ADP + phosphate + H(+). It catalyses the reaction methotrexate(in) + ATP + H2O = methotrexate(out) + ADP + phosphate + H(+). The catalysed reaction is riboflavin(in) + ATP + H2O = riboflavin(out) + ADP + phosphate + H(+). It carries out the reaction pheophorbide a(in) + ATP + H2O = pheophorbide a(out) + ADP + phosphate + H(+). The enzyme catalyses itaconate(in) + ATP + H2O = itaconate(out) + ADP + phosphate + H(+). In terms of biological role, broad substrate specificity ATP-dependent transporter of the ATP-binding cassette (ABC) family that actively extrudes a wide variety of physiological compounds, dietary toxins and xenobiotics from cells. Involved in porphyrin homeostasis, mediating the export of protoporphyrin IX (PPIX) from both mitochondria to cytosol and cytosol to extracellular space, it also functions in the cellular export of heme. Also mediates the efflux of sphingosine-1-P from cells. Acts as a urate exporter functioning in both renal and extrarenal urate excretion. In kidney, it also functions as a physiological exporter of the uremic toxin indoxyl sulfate. Also involved in the excretion of steroids like estrone 3-sulfate/E1S, 3beta-sulfooxy-androst-5-en-17-one/DHEAS, and other sulfate conjugates. Mediates the secretion of the riboflavin and biotin vitamins into milk. Extrudes pheophorbide a, a phototoxic porphyrin catabolite of chlorophyll, reducing its bioavailability. Plays an important role in the exclusion of xenobiotics from the brain. It confers to cells a resistance to multiple drugs and other xenobiotics including mitoxantrone, pheophorbide, camptothecin, methotrexate, azidothymidine, and the anthracyclines daunorubicin and doxorubicin, through the control of their efflux. In placenta, it limits the penetration of drugs from the maternal plasma into the fetus. May play a role in early stem cell self-renewal by blocking differentiation. In inflammatory macrophages, exports itaconate from the cytosol to the extracellular compartment and limits the activation of TFEB-dependent lysosome biogenesis involved in antibacterial innate immune response. The sequence is that of Broad substrate specificity ATP-binding cassette transporter ABCG2 (Abcg2) from Rattus norvegicus (Rat).